Reading from the N-terminus, the 520-residue chain is MVTSSFPISVAVFALITLQVGTQDSFIAAVYEHAVILPNKTETPVSQEDALNLMNENIDILETAIKQAAEQGARIIVTPEDALYGWKFTRETVFPYLEDIPDPQVNWIPCQDPHRFGHTPVQARLSCLAKDNSIYVLANLGDKKPCNSRDSTCPPNGYFQYNTNVVYNTEGKLVARYHKYHLYSEPQFNVPEKPELVTFNTAFGRFGIFTCFDIFFYDPGVTLVKDFHVDTILFPTAWMNVLPLLTAIEFHSAWAMGMGVNLLVANTHHVSLNMTGSGIYAPNGPKVYHYDMKTELGKLLLSEVDSHPLSSLAYPTAVNWNAYATTIKPFPVQKNTFRGFISRDGFNFTELFENAGNLTVCQKELCCHLSYRMLQKEENEVYVLGAFTGLHGRRRREYWQVCTLLKCKTTNLTTCGRPVETASTRFEMFSLSGTFGTEYVFPEVLLTEIHLSPGKFEVLKDGRLVNKNGSSGPILTVSLFGRWYTKDSLYSSCGTSNSAITYLLIFILLMIIALQNIVML.

Positions 1-22 (MVTSSFPISVAVFALITLQVGT) are cleaved as a signal peptide. Residues 31-306 (YEHAVILPNK…GKLLLSEVDS (276 aa)) form the CN hydrolase domain. N-linked (GlcNAc...) asparagine glycosylation is present at Asn39. Catalysis depends on Glu80, which acts as the Proton acceptor. The active-site Proton donor is the Lys179. Cys211 acts as the Nucleophile in catalysis. N-linked (GlcNAc...) asparagine glycosylation is found at Asn273, Asn347, Asn357, Asn411, and Asn468. A lipid anchor (GPI-anchor amidated cysteine) is attached at Cys493. The propeptide at 494-520 (GTSNSAITYLLIFILLMIIALQNIVML) is removed in mature form.

This sequence belongs to the carbon-nitrogen hydrolase superfamily. BTD/VNN family. In terms of tissue distribution, widely expressed with higher expression in spleen and blood.

The protein resides in the cell membrane. It catalyses the reaction (R)-pantetheine + H2O = cysteamine + (R)-pantothenate. Functionally, amidohydrolase that hydrolyzes specifically one of the carboamide linkages in D-pantetheine thus recycling pantothenic acid (vitamin B5) and releasing cysteamine. Involved in the thymus homing of bone marrow cells. May regulate beta-2 integrin-mediated cell adhesion, migration and motility of neutrophil. The protein is Pantetheine hydrolase VNN2 of Homo sapiens (Human).